Reading from the N-terminus, the 373-residue chain is tRNA-specific 2-thiouridylase MnmA (373 aa).

Residues 12 to 19 and M38 contribute to the ATP site; that span reads GMSGGVDS. An interaction with target base in tRNA region spans residues 98–100; the sequence is NPD. C103 acts as the Nucleophile in catalysis. A disulfide bond links C103 and C200. ATP is bound at residue G127. Positions 150–152 are interaction with tRNA; it reads KDQ. Residue C200 is the Cysteine persulfide intermediate of the active site. The interaction with tRNA stretch occupies residues 312–313; it reads RY.

It belongs to the MnmA/TRMU family.

It localises to the cytoplasm. It carries out the reaction S-sulfanyl-L-cysteinyl-[protein] + uridine(34) in tRNA + AH2 + ATP = 2-thiouridine(34) in tRNA + L-cysteinyl-[protein] + A + AMP + diphosphate + H(+). Its function is as follows. Catalyzes the 2-thiolation of uridine at the wobble position (U34) of tRNA, leading to the formation of s(2)U34. This is tRNA-specific 2-thiouridylase MnmA from Streptococcus pyogenes serotype M3 (strain SSI-1).